Reading from the N-terminus, the 928-residue chain is MTYFLNDIRPPSPNDITPSFTLLTKELFDKLDGVRKESLGDFRTVTEKKAFIIKTFINTFRTHIGNDIYPSAKLIFPEKSGRIYFIKEVALARLLIKMYKIPKESEDYITLHDWNKSYQRSRRFSIDEKKIRDLPLQASRIISKRRPIVDKLEEYTVPQINSSLDQLALEKVSQGQIDILKPLFDNLSIPEVRWLIHILLNKSILTSMERFFFNTWHPDGYRVFSICNDLQKTLQFSTNPDLRLDPSQLAIHPCFKFKPQLSERLTTSYKTLVKKLQRKHEMDPPYEKKFQELGLENKFYIEEKMDGDRMLLHKDGDSFKFFSRRLKDYSYLYGESFQFGALTKFLAHAFAGNIQSVILDGEMVAYDYERNVILPFGTLKSSAIQESVRQFTTIDQYEQQTAYPFFLVFDILFLNGKDLTNYPLFFRKNILNRILRPIPNRFEVLDTRLGSSSEDIERAIREVVSSRCEGLVLKNVQSKYEIDGFRNPDWIKVKPEYLEKFGENLDLVVIGKSPAIKNSYMCGLKSVTDGVYYSFCTCANGIEIEEFDKIERLTHGKWIKTDVSMPPESLIKFGTKIPTFWIHPSDSLVLEIRARSIDTRAGTSYAVGSTLHNNHCRKIREDKSIDECVTLQEYTHIKANYINDLNKAQTALGKKREPVYSLDNESKLKKVKVESDLFSGIEFLIMSDKREADGEVTTIEEMKAMVKQYGGKIVNSVDLATNYQIMVITERELPVSSQYLSKGIDLVKPIWIYECIKRGCVLQLEPYFIFASKNWDNFNHMVDQYGDSYIIHHPLNIVVPKLSESELEDLRNGFDWGDLKPWIYLFKGLSFYVCGNNLSARFLKERIERFSGDLSKHFIECCYIVIPDNHSRPLMLREIDKMSNQISREMVIDKNGGSSRIPHFVTEAFVQASIKMNYIPDPDDYKFR.

Residues Glu302, Lys304, Arg309, Glu362, Phe409, Glu469, Lys474, Lys492, and Lys494 each contribute to the ATP site. Catalysis depends on Lys304, which acts as the N6-AMP-lysine intermediate. Glu362 contributes to the Mg(2+) binding site. Glu469 serves as a coordination point for Mg(2+). 2 BRCT domains span residues 673 to 769 (VESD…PYFI) and 821 to 927 (PWIY…DYKF).

The protein belongs to the ATP-dependent DNA ligase family. Requires Mg(2+) as cofactor.

The protein localises to the nucleus. The catalysed reaction is ATP + (deoxyribonucleotide)n-3'-hydroxyl + 5'-phospho-(deoxyribonucleotide)m = (deoxyribonucleotide)n+m + AMP + diphosphate.. In terms of biological role, DNA ligase involved in DNA non-homologous end joining (NHEJ); required for double-strand break (DSB) repair. Not required for the repair of DSBs induced by ionizing radiation or UV light. Has an important role in morphogenesis, positively affecting the capacity to form hyphae. This Candida albicans (strain SC5314 / ATCC MYA-2876) (Yeast) protein is DNA ligase 4 (LIG4).